The primary structure comprises 332 residues: Phosphate acyltransferase (332 aa).

The protein belongs to the PlsX family. In terms of assembly, homodimer. Probably interacts with PlsY.

The protein localises to the cytoplasm. It catalyses the reaction a fatty acyl-[ACP] + phosphate = an acyl phosphate + holo-[ACP]. Its pathway is lipid metabolism; phospholipid metabolism. Its function is as follows. Catalyzes the reversible formation of acyl-phosphate (acyl-PO(4)) from acyl-[acyl-carrier-protein] (acyl-ACP). This enzyme utilizes acyl-ACP as fatty acyl donor, but not acyl-CoA. The sequence is that of Phosphate acyltransferase from Oceanobacillus iheyensis (strain DSM 14371 / CIP 107618 / JCM 11309 / KCTC 3954 / HTE831).